A 238-amino-acid polypeptide reads, in one-letter code: Sugar fermentation stimulation protein homolog (238 aa).

It belongs to the SfsA family.

In Haemophilus influenzae (strain 86-028NP), this protein is Sugar fermentation stimulation protein homolog.